The primary structure comprises 132 residues: Cytidine deaminase (132 aa).

The region spanning 1–128 (MDRQMLIKEA…ELLPGAFTAE (128 aa)) is the CMP/dCMP-type deaminase domain. 42–44 (NIE) contributes to the substrate binding site. C53 is a binding site for Zn(2+). E55 acts as the Proton donor in catalysis. 2 residues coordinate Zn(2+): C86 and C89.

It belongs to the cytidine and deoxycytidylate deaminase family. Zn(2+) serves as cofactor.

It carries out the reaction cytidine + H2O + H(+) = uridine + NH4(+). The enzyme catalyses 2'-deoxycytidine + H2O + H(+) = 2'-deoxyuridine + NH4(+). Functionally, this enzyme scavenges exogenous and endogenous cytidine and 2'-deoxycytidine for UMP synthesis. The polypeptide is Cytidine deaminase (cdd) (Halalkalibacterium halodurans (strain ATCC BAA-125 / DSM 18197 / FERM 7344 / JCM 9153 / C-125) (Bacillus halodurans)).